We begin with the raw amino-acid sequence, 231 residues long: Ribose-5-phosphate isomerase A (231 aa).

Substrate-binding positions include 32-35 (TGST), 85-88 (DGAD), and 98-101 (KGGG). The Proton acceptor role is filled by glutamate 107. A substrate-binding site is contributed by lysine 125.

This sequence belongs to the ribose 5-phosphate isomerase family. In terms of assembly, homodimer.

The enzyme catalyses aldehydo-D-ribose 5-phosphate = D-ribulose 5-phosphate. It participates in carbohydrate degradation; pentose phosphate pathway; D-ribose 5-phosphate from D-ribulose 5-phosphate (non-oxidative stage): step 1/1. In terms of biological role, catalyzes the reversible conversion of ribose-5-phosphate to ribulose 5-phosphate. In Paraburkholderia phymatum (strain DSM 17167 / CIP 108236 / LMG 21445 / STM815) (Burkholderia phymatum), this protein is Ribose-5-phosphate isomerase A.